We begin with the raw amino-acid sequence, 1574 residues long: Multiple epidermal growth factor-like domains protein 6 (1574 aa).

A signal peptide spans 1–27; sequence MPVRAEARAAWRVVALALLLLPAMPAA. In terms of domain architecture, EMI spans 40-122; the sequence is MPHVCAEQKL…QKPGQEGCLS (83 aa). 99 disulfides stabilise this stretch: Cys44/Cys108, Cys74/Cys80, Cys107/Cys120, Cys127/Cys138, Cys134/Cys147, Cys149/Cys162, Cys168/Cys179, Cys175/Cys188, Cys190/Cys203, Cys209/Cys220, Cys216/Cys230, Cys232/Cys245, Cys251/Cys262, Cys258/Cys271, Cys273/Cys286, Cys292/Cys303, Cys299/Cys312, Cys314/Cys327, Cys338/Cys349, Cys345/Cys358, Cys360/Cys373, Cys379/Cys389, Cys385/Cys398, Cys400/Cys411, Cys419/Cys430, Cys426/Cys439, Cys441/Cys454, Cys524/Cys537, Cys531/Cys544, Cys546/Cys555, Cys568/Cys580, Cys574/Cys587, Cys589/Cys598, Cys611/Cys623, Cys617/Cys630, Cys632/Cys641, Cys654/Cys668, Cys660/Cys675, Cys677/Cys686, Cys699/Cys711, Cys705/Cys718, Cys722/Cys731, Cys744/Cys755, Cys750/Cys762, Cys764/Cys773, Cys786/Cys799, Cys793/Cys806, Cys808/Cys817, Cys830/Cys842, Cys836/Cys849, Cys851/Cys860, Cys873/Cys886, Cys879/Cys893, Cys895/Cys904, Cys917/Cys929, Cys923/Cys936, Cys938/Cys947, Cys960/Cys972, Cys966/Cys979, Cys981/Cys990, Cys1003/Cys1015, Cys1009/Cys1022, Cys1024/Cys1033, Cys1046/Cys1058, Cys1052/Cys1065, Cys1067/Cys1076, Cys1089/Cys1101, Cys1095/Cys1108, Cys1110/Cys1119, Cys1132/Cys1144, Cys1138/Cys1151, Cys1153/Cys1162, Cys1175/Cys1187, Cys1181/Cys1194, Cys1196/Cys1205, Cys1218/Cys1231, Cys1224/Cys1238, Cys1240/Cys1249, Cys1262/Cys1274, Cys1268/Cys1281, Cys1283/Cys1292, Cys1305/Cys1317, Cys1311/Cys1324, Cys1326/Cys1335, Cys1348/Cys1360, Cys1354/Cys1367, Cys1369/Cys1378, Cys1391/Cys1403, Cys1397/Cys1410, Cys1412/Cys1421, Cys1434/Cys1446, Cys1440/Cys1453, Cys1455/Cys1464, Cys1477/Cys1489, Cys1483/Cys1496, Cys1498/Cys1507, Cys1520/Cys1532, Cys1526/Cys1539, and Cys1541/Cys1550. The EGF-like 1; calcium-binding domain maps to 123 to 163; it reads DVDECASANGGCEGPCCNTVGGFYCRCPPGYQLQGDGKTCQ. An EGF-like 2; calcium-binding domain is found at 164-204; it reads DVDECRAHNGGCQHRCVNTPGSYLCECKPGFRLHTDGRTCL. 2 EGF-like domains span residues 205–246 and 247–287; these read AISS…RRCV and RRSP…KTCE. An EGF-like 5; calcium-binding domain is found at 288–328; the sequence is DVDECALGLAQCAHGCLNTQGSFKCVCHAGYELGADGRQCY. EGF-like domains are found at residues 334 to 374 and 375 to 412; these read IVNS…KTCI and DIDDCANSPCCQQACANTPGGYECSCFAGYRLNTDGCG. Residues 415–455 enclose the EGF-like 8; calcium-binding domain; it reads DVDECASGHGGCEHHCSNLAGSFQCFCEAGYRLDEDRRGCT. 24 EGF-like domains span residues 520-556, 564-599, 607-642, 650-687, 695-732, 740-774, 782-818, 826-861, 869-905, 913-948, 956-991, 999-1034, 1042-1077, 1085-1120, 1128-1163, 1171-1206, 1214-1250, 1258-1293, 1301-1336, 1344-1379, 1387-1422, 1430-1465, 1473-1508, and 1516-1551; these read FGHDCSLTCDDCRNGGTCFPGQDGCDCPEGWTGIICN, FGKNCSSPCTCQNGGTCDPVLGACRCPPGVSGAHCE, YGKHCRKKCHCANRGRCHRLYGACLCDPGLYGRFCH, FGPGCSEDCLCEQSHTRSCNPKDGSCSCKAGFQGERCQ, FGPGCRHRCTCQPGVACDPVSGECRTQCPPGYQGEDCG, FGVNCSGSCSCVGAPCHRVTGECLCPPGKTGEDCG, WGLGCQEICPACEHGASCNPETGTCLCLPGFVGSRCQ, YGTGCQIRCACANDGHCDPTTGRCSCAPGWTGLSCQ, WGPDCIHPCNCSAGHGNCDAVSGLCLCEAGYEGPRCE, YGPSCEQKCRCEHGAACDHVSGACTCPAGWRGSFCE, FGLDCDSACNCSAGAPCDAVTGSCICPAGRWGPRCA, FGLNCSQICTCFNGASCDSVTGQCHCAPGWMGPTCL, YGKNCQHSCLCRNGGRCDPILGQCTCPEGWTGLACE, YAAGCQLNCSCLHGGICDRLTGHCLCPAGWTGDKCQ, FGVHCEEHCACRKGASCHHVTGACFCPPGWRGPHCE, FGEACAQRCLCPTNASCHHVTGECRCPPGFTGLSCE, FGKDCEHLCQCPGETWACDPASGVCTCAAGYHGTGCL, YGPGCEHICKCLNGGTCDPATGACYCPAGFLGADCS, FGPSCAHVCACRQGAACDPVSGACICSPGKTGVRCE, FGKGCELKCACRNGGLCHATNGSCSCPLGWMGPHCE, YGAACLLECFCQNNGSCEPTTGACLCGPGFYGQACE, HGPGCQRVCECQQGAPCDPVSGQCLCPAGFHGQFCE, FGDGCLQQCNCHTGVPCDPISGLCLCPPGRTGAACD, and FGPGCALRCDCGGGADCDPISGQCHCVDSYMGPTCR. The segment covering 1555–1568 has biased composition (polar residues); that stretch reads TQISSSRPAPQHPS. Residues 1555 to 1574 form a disordered region; the sequence is TQISSSRPAPQHPSSRAMKH.

In terms of tissue distribution, expressed in lung.

It is found in the secreted. In Rattus norvegicus (Rat), this protein is Multiple epidermal growth factor-like domains protein 6 (Megf6).